A 613-amino-acid polypeptide reads, in one-letter code: Thioredoxin reductase 1, cytoplasmic (613 aa).

The interval 58 to 121 is disordered; the sequence is AVLPASRPSK…LPTMNGSKDP (64 aa). Residues 65–74 show a composition bias toward polar residues; sequence PSKTLPSSSQ. Residues 136 to 137, 156 to 157, 172 to 173, and 177 to 181 each bind FAD; these read SG, DF, TC, and GCIPK. Cysteines 173 and 178 form a disulfide. The residue at position 182 (lysine 182) is an N6-succinyllysine. Tyrosine 245 bears the Phosphotyrosine mark. FAD-binding positions include 245–246 and threonine 275; that span reads YG. NADP(+) is bound by residues arginine 280, 312 to 318, 335 to 336, arginine 340, 340 to 342, 406 to 407, and lysine 429; these read ASYVALE, RS, RGF, and GR. Position 314 (tyrosine 314) interacts with FAD. Residues aspartate 448, 455–457, and histidine 586 each bind FAD; that span reads ELT. Glutamate 455 serves as a coordination point for NADP(+). The Proton acceptor role is filled by histidine 586. The cysteinyl-selenocysteine (Cys-Sec) cross-link spans 611-612; it reads CU. A non-standard amino acid (selenocysteine) is located at residue selenocysteine 612.

The protein belongs to the class-I pyridine nucleotide-disulfide oxidoreductase family. As to quaternary structure, homodimer. The cofactor is FAD. ISGylated.

It is found in the cytoplasm. The enzyme catalyses [thioredoxin]-dithiol + NADP(+) = [thioredoxin]-disulfide + NADPH + H(+). The catalysed reaction is H2O2 + NADPH + H(+) = NADP(+) + 2 H2O. In terms of biological role, reduces disulfideprotein thioredoxin (Trx) to its dithiol-containing form. Homodimeric flavoprotein involved in the regulation of cellular redox reactions, growth and differentiation. Contains a selenocysteine residue at the C-terminal active site that is essential for catalysis. Also has reductase activity on hydrogen peroxide (H2O2). In Mus musculus (Mouse), this protein is Thioredoxin reductase 1, cytoplasmic.